The primary structure comprises 213 residues: Nicotinate-nucleotide adenylyltransferase (213 aa).

Belongs to the NadD family.

It carries out the reaction nicotinate beta-D-ribonucleotide + ATP + H(+) = deamido-NAD(+) + diphosphate. The protein operates within cofactor biosynthesis; NAD(+) biosynthesis; deamido-NAD(+) from nicotinate D-ribonucleotide: step 1/1. Its function is as follows. Catalyzes the reversible adenylation of nicotinate mononucleotide (NaMN) to nicotinic acid adenine dinucleotide (NaAD). This is Nicotinate-nucleotide adenylyltransferase from Salmonella typhi.